Consider the following 862-residue polypeptide: Squamosa promoter-binding-like protein 1 (862 aa).

A disordered region spans residues 55–98; that stretch reads KRRRVSPEDDDGEECINAATTNGDDGQISGQRGRSSEDEMPRQG. Positions 72–87 are enriched in polar residues; it reads AATTNGDDGQISGQRG. Residues 104 to 181 form an SBP-type zinc finger; that stretch reads GPCCQVDGCT…AQHNRRRRKV (78 aa). Residues Cys107, Cys112, Cys129, His132, Cys148, Cys151, His155, and Cys167 each coordinate Zn(2+). Residues 164–180 carry the Bipartite nuclear localization signal motif; that stretch reads KKSCRSRLAQHNRRRRK.

In terms of tissue distribution, ubiquitous.

Its subcellular location is the nucleus. Its function is as follows. Trans-acting factor that binds specifically to the consensus nucleotide sequence 5'-TNCGTACAA-3'. The chain is Squamosa promoter-binding-like protein 1 (SPL1) from Oryza sativa subsp. japonica (Rice).